The sequence spans 73 residues: Ubiquitin-like protein 5 (73 aa).

The 73-residue stretch at 1-73 (MIEITCNDRL…DGMNLELYYQ (73 aa)) folds into the Ubiquitin-like domain.

It is found in the cytoplasm. This is Ubiquitin-like protein 5 (ubl) from Drosophila melanogaster (Fruit fly).